Reading from the N-terminus, the 339-residue chain is MLKQLLSKCAEGKALTEDEAYAAMNIIMSGEATDSQIASLLSMLRLRGETVDELVGFVRAMRDRMTAIEASDDVIDTCGTGGDGAATFNVSTAAAIVISSLGVKVAKHGNRAVSSKSGSADVLERLGIDIQTSPSAAKQALETKGLAFLFAPLYHAAMKHAAGPRKEIGFRTVFNLIGPLANPARCKRQVVGVYSTCYAEKLAEAMRRLGSEHVLFVTGRDGLDECSIAAETDVVELKDGAIRRFVIAPEDAGLPRGELADVQVRDPEESAALLEAVMAGTAPESAINIVALNAGAALYAAGKAETIAEGVAMAKEAILSKTAYEQLQRLRAKEVIHDA.

5-phospho-alpha-D-ribose 1-diphosphate-binding positions include Gly-79, 82–83 (GD), Thr-87, 89–92 (NVST), 107–115 (KHGNRAVSS), and Ser-119. Anthranilate is bound at residue Gly-79. Ser-91 is a Mg(2+) binding site. Asn-110 contributes to the anthranilate binding site. Residue Arg-165 coordinates anthranilate. Mg(2+)-binding residues include Asp-224 and Glu-225.

This sequence belongs to the anthranilate phosphoribosyltransferase family. Homodimer. Requires Mg(2+) as cofactor.

It carries out the reaction N-(5-phospho-beta-D-ribosyl)anthranilate + diphosphate = 5-phospho-alpha-D-ribose 1-diphosphate + anthranilate. The protein operates within amino-acid biosynthesis; L-tryptophan biosynthesis; L-tryptophan from chorismate: step 2/5. Functionally, catalyzes the transfer of the phosphoribosyl group of 5-phosphorylribose-1-pyrophosphate (PRPP) to anthranilate to yield N-(5'-phosphoribosyl)-anthranilate (PRA). This chain is Anthranilate phosphoribosyltransferase, found in Geobacillus kaustophilus (strain HTA426).